Here is a 59-residue protein sequence, read N- to C-terminus: Large ribosomal subunit protein bL32 (59 aa).

The segment covering 1–16 (MAVPKRKTSPSKRGMR) has biased composition (basic residues). Residues 1–41 (MAVPKRKTSPSKRGMRRSADALKAPTYIEDKNSGELRRPHH) form a disordered region. Residues 28–41 (IEDKNSGELRRPHH) are compositionally biased toward basic and acidic residues.

Belongs to the bacterial ribosomal protein bL32 family.

This chain is Large ribosomal subunit protein bL32, found in Bartonella henselae (strain ATCC 49882 / DSM 28221 / CCUG 30454 / Houston 1) (Rochalimaea henselae).